The chain runs to 201 residues: UPF0301 protein RHECIAT_CH0001061 (201 aa).

The protein belongs to the UPF0301 (AlgH) family.

The protein is UPF0301 protein RHECIAT_CH0001061 of Rhizobium etli (strain CIAT 652).